A 798-amino-acid chain; its full sequence is Vacuolar protein sorting-associated protein 53 homolog (798 aa).

Belongs to the VPS53 family. In terms of assembly, component of the Golgi-associated retrograde protein (GARP) complex, also called VFT (VPS fifty-three) complex, composed of vps-51, vps-52, vps-53 and vps-54. Within the complex interacts with vps-51, vps-52 and vps-54. Ubiquitously expressed, with particularly strong expression in neuronal cells. Specifically expressed in head and tail neurons and in the pharynx and ventral cord motor neurons.

It is found in the golgi apparatus. The protein localises to the trans-Golgi network membrane. The protein resides in the endosome membrane. Its subcellular location is the perikaryon. It localises to the cytoplasm. It is found in the perinuclear region. Its function is as follows. Acts as a component of the GARP complex that is involved in retrograde transport from early and late endosomes to the trans-Golgi network (TGN). The GARP complex facilitates tethering as well as SNARE complex assembly at the Golgi. Plays a role in the trafficking of cargo to dense-core vesicles, probably through association with the EARP-interacting protein eipr-1. Important for neuronal function. The chain is Vacuolar protein sorting-associated protein 53 homolog from Caenorhabditis elegans.